The following is an 809-amino-acid chain: Phenylalanine--tRNA ligase beta subunit (809 aa).

A tRNA-binding domain is found at 39–152; sequence KDKWPNVYVG…ADALVGMLAS (114 aa). In terms of domain architecture, B5 spans 404 to 492; it reads KERNGIVLSL…RIAGYHTIPC (89 aa). Mg(2+) contacts are provided by D470, D476, E479, and E480. The FDX-ACB domain maps to 717-808; it reads NRFPAVERDL…LNTETGAVLR (92 aa).

It belongs to the phenylalanyl-tRNA synthetase beta subunit family. Type 1 subfamily. Tetramer of two alpha and two beta subunits. Requires Mg(2+) as cofactor.

The protein resides in the cytoplasm. The enzyme catalyses tRNA(Phe) + L-phenylalanine + ATP = L-phenylalanyl-tRNA(Phe) + AMP + diphosphate + H(+). This Dehalococcoides mccartyi (strain CBDB1) protein is Phenylalanine--tRNA ligase beta subunit.